A 200-amino-acid polypeptide reads, in one-letter code: FSQKYIELVVVADHGMFTKYNGNLNTIRTRVHEIVNTLNGFYRSLNVRVSLTELEIWSNQDLINVQSAAADTLKTFGEWRERVLLNRISHDNAQLLTAIDLADNTIGIAYTGGMCYPKNSVGIVQDHSPKTLLIAVTMAHELGHNLGMKHDENHCHCSASFCIMPPSISEGPSYEFSDCSKDYYQMFLTKRKPQCILNKP.

One can recognise a Peptidase M12B domain in the interval 4–200 (KYIELVVVAD…RKPQCILNKP (197 aa)). Ca(2+) is bound by residues Glu-7 and Asp-91. Cystine bridges form between Cys-115–Cys-195, Cys-155–Cys-179, and Cys-157–Cys-162. Position 140 (His-140) interacts with Zn(2+). Residue Glu-141 is part of the active site. Zn(2+)-binding residues include His-144 and His-150. Residues Cys-195 and Asn-198 each contribute to the Ca(2+) site.

As to quaternary structure, monomer. It depends on Zn(2+) as a cofactor. Expressed by the venom gland.

The protein localises to the secreted. Snake venom zinc metalloproteinase that induces hemorrhage. The protein is Snake venom metalloproteinase rhomb-I of Lachesis muta rhombeata (Bushmaster).